Reading from the N-terminus, the 184-residue chain is Ribosome maturation factor RimP (184 aa).

It belongs to the RimP family.

It localises to the cytoplasm. In terms of biological role, required for maturation of 30S ribosomal subunits. The polypeptide is Ribosome maturation factor RimP (Corynebacterium diphtheriae (strain ATCC 700971 / NCTC 13129 / Biotype gravis)).